The sequence spans 279 residues: Formamidopyrimidine-DNA glycosylase (279 aa).

The active-site Schiff-base intermediate with DNA is P2. Catalysis depends on E3, which acts as the Proton donor. The active-site Proton donor; for beta-elimination activity is K57. DNA is bound by residues H90, R109, and R151. The segment at 236 to 270 adopts an FPG-type zinc-finger fold; it reads FVYGRTGQPCRVCQTPIAVLRLGQRSTFYCPACQQ. R260 acts as the Proton donor; for delta-elimination activity in catalysis.

Belongs to the FPG family. Monomer. It depends on Zn(2+) as a cofactor.

It catalyses the reaction Hydrolysis of DNA containing ring-opened 7-methylguanine residues, releasing 2,6-diamino-4-hydroxy-5-(N-methyl)formamidopyrimidine.. It carries out the reaction 2'-deoxyribonucleotide-(2'-deoxyribose 5'-phosphate)-2'-deoxyribonucleotide-DNA = a 3'-end 2'-deoxyribonucleotide-(2,3-dehydro-2,3-deoxyribose 5'-phosphate)-DNA + a 5'-end 5'-phospho-2'-deoxyribonucleoside-DNA + H(+). Its function is as follows. Involved in base excision repair of DNA damaged by oxidation or by mutagenic agents. Acts as a DNA glycosylase that recognizes and removes damaged bases. Has a preference for oxidized purines, such as 7,8-dihydro-8-oxoguanine (8-oxoG). Has AP (apurinic/apyrimidinic) lyase activity and introduces nicks in the DNA strand. Cleaves the DNA backbone by beta-delta elimination to generate a single-strand break at the site of the removed base with both 3'- and 5'-phosphates. The polypeptide is Formamidopyrimidine-DNA glycosylase (Methylobacillus flagellatus (strain ATCC 51484 / DSM 6875 / VKM B-1610 / KT)).